A 432-amino-acid chain; its full sequence is Probable imidazolonepropionase (432 aa).

Positions 159 and 192 each coordinate 4-imidazolone-5-propanoate. Residue tyrosine 159 coordinates N-formimidoyl-L-glutamate. Histidine 260 serves as a coordination point for Fe(3+). Histidine 260 provides a ligand contact to Zn(2+). Residue glutamate 263 participates in 4-imidazolone-5-propanoate binding. Aspartate 334 contributes to the Fe(3+) binding site. Aspartate 334 contacts Zn(2+). Asparagine 336 lines the N-formimidoyl-L-glutamate pocket.

This sequence belongs to the metallo-dependent hydrolases superfamily. HutI family. It depends on Zn(2+) as a cofactor. Requires Fe(3+) as cofactor.

It catalyses the reaction 4-imidazolone-5-propanoate + H2O = N-formimidoyl-L-glutamate. The protein operates within amino-acid degradation; L-histidine degradation into L-glutamate; N-formimidoyl-L-glutamate from L-histidine: step 3/3. This Xenopus tropicalis (Western clawed frog) protein is Probable imidazolonepropionase (amdhd1).